We begin with the raw amino-acid sequence, 445 residues long: Amino-acid acetyltransferase (445 aa).

The 140-residue stretch at 299-438 (EQVRQAQIDD…QGLYNYQRNS (140 aa)) folds into the N-acetyltransferase domain.

It belongs to the acetyltransferase family. ArgA subfamily.

It is found in the cytoplasm. It catalyses the reaction L-glutamate + acetyl-CoA = N-acetyl-L-glutamate + CoA + H(+). It functions in the pathway amino-acid biosynthesis; L-arginine biosynthesis; N(2)-acetyl-L-ornithine from L-glutamate: step 1/4. The protein is Amino-acid acetyltransferase of Vibrio atlanticus (strain LGP32) (Vibrio splendidus (strain Mel32)).